Reading from the N-terminus, the 203-residue chain is MNNLKQGKFITFEGGEGIGKSTQSQMLYEYLQSQNTPVILTREVGGTIVAEKMREILVHEELLPMSELLQAMAARYDHMARKIIPALQEGHIVICDRFIESTVCYQGLELENGIDLVYNLHKTLMPSLMPDITFFIDVEPDTAIKRVNSRNMNNKFDIRGIDFYKKIYYCFKELSNRFPERIKTIKASDLSPLEVHELIKKHL.

An ATP-binding site is contributed by 14–21 (GGEGIGKS).

Belongs to the thymidylate kinase family.

It carries out the reaction dTMP + ATP = dTDP + ADP. Phosphorylation of dTMP to form dTDP in both de novo and salvage pathways of dTTP synthesis. This Rickettsia conorii (strain ATCC VR-613 / Malish 7) protein is Thymidylate kinase.